Consider the following 175-residue polypeptide: Snake venom metalloproteinase BpMP-1 (175 aa).

Residues 1–175 (YIELAVVADH…KHNPQCILNK (175 aa)) form the Peptidase M12B domain. Residues E3 and D74 each contribute to the Ca(2+) site. 3 disulfides stabilise this stretch: C98-C171, C131-C155, and C133-C138. A Zn(2+)-binding site is contributed by H117. The active site involves E118. 2 residues coordinate Zn(2+): H121 and H127. C171 and N174 together coordinate Ca(2+).

Belongs to the venom metalloproteinase (M12B) family. P-I subfamily. As to quaternary structure, monomer. The cofactor is Zn(2+). As to expression, expressed by the venom gland.

The protein localises to the secreted. Inhibited by EDTA, 1,10-phenanthroline and beta-mercaptoethanol. Not inhibited by the serine protease inhibitors aprotinin and benzamidin. Functionally, non-hemorrhagic snake venom zinc metalloprotease that hydrolyzes the Aalpha-chain of fibrinogen, more slowly the Bbeta-chain and shows no effect on the gamma chain. Has no coagulant activity on bovine plasma and fibrinogen. In Bothrops pauloensis (Neuwied's lancehead), this protein is Snake venom metalloproteinase BpMP-1.